The primary structure comprises 231 residues: Ribonuclease HII (231 aa).

The RNase H type-2 domain occupies tryptophan 33–alanine 222. Aspartate 39, glutamate 40, and aspartate 130 together coordinate a divalent metal cation.

It belongs to the RNase HII family. The cofactor is Mn(2+). It depends on Mg(2+) as a cofactor.

It is found in the cytoplasm. The enzyme catalyses Endonucleolytic cleavage to 5'-phosphomonoester.. Its function is as follows. Endonuclease that specifically degrades the RNA of RNA-DNA hybrids. The sequence is that of Ribonuclease HII from Sinorhizobium fredii (strain NBRC 101917 / NGR234).